We begin with the raw amino-acid sequence, 129 residues long: Follitropin subunit beta (129 aa).

Positions 1–18 (MKSIQFCFFFCCWKAICC) are cleaved as a signal peptide. 6 disulfide bridges follow: C21–C69, C35–C84, C38–C122, C46–C100, C50–C102, and C105–C112. N-linked (GlcNAc...) asparagine glycosylation is found at N25 and N42.

Belongs to the glycoprotein hormones subunit beta family. As to quaternary structure, heterodimer. The active follitropin is a heterodimer composed of an alpha chain/CGA shared with other hormones and a unique beta chain/FSHB shown here.

Its subcellular location is the secreted. Functionally, together with the alpha chain CGA constitutes follitropin, the follicle-stimulating hormone, and provides its biological specificity to the hormone heterodimer. Binds FSHR, a G protein-coupled receptor, on target cells to activate downstream signaling pathways. Follitropin is involved in follicle development and spermatogenesis in reproductive organs. The polypeptide is Follitropin subunit beta (FSHB) (Cavia porcellus (Guinea pig)).